We begin with the raw amino-acid sequence, 1333 residues long: Partitioning defective 3 homolog (1333 aa).

Serine 25 carries the post-translational modification Phosphoserine. Phosphothreonine is present on threonine 91. The disordered stretch occupies residues 143–262; the sequence is SSDPALTGLS…VGHADTGLEN (120 aa). Composition is skewed to polar residues over residues 150 to 163 and 171 to 187; these read GLST…FSSE and TRWS…TAGS. Residues serine 156 and serine 174 each carry the phosphoserine modification. The segment covering 190–203 has biased composition (basic and acidic residues); it reads TCDRKKDENYRSLP. A compositionally biased stretch (polar residues) spans 207 to 224; that stretch reads SSWSNQFQRDNARSSLSA. In terms of domain architecture, PDZ 1 spans 271–359; it reads MVKLVQVPND…ARVIWFHVVP (89 aa). Disordered stretches follow at residues 369 to 388 and 397 to 441; these read LSQR…DSHC and NAPQ…APPS. Position 383 is a phosphoserine (serine 383). 2 consecutive PDZ domains span residues 461–546 and 590–677; these read NIQL…LVFR and EVPL…GMIQ. Tyrosine 489 is modified (phosphotyrosine). Phosphoserine occurs at positions 692, 695, 715, 728, 806, and 824. Interaction with PRKCI and PRKCZ regions lie at residues 712–932 and 712–936; these read RRIS…YDKP and RRIS…MVDD. At lysine 831 the chain carries N6-acetyllysine. Serine 834 is subject to Phosphoserine. An N6-acetyllysine modification is found at lysine 848. Serine 849 and serine 869 each carry phosphoserine. Disordered stretches follow at residues 861-884, 928-1011, 1024-1071, 1110-1267, and 1283-1333; these read TVDD…KKSS, SYDK…AKKG, KHRK…ERQA, PQSP…LGGH, and QEQR…PFYS. Residue lysine 881 is modified to N6-acetyllysine. The interaction with FRMD4A stretch occupies residues 931–1333; sequence KPMVDDDDEG…TPEKGRPFYS (403 aa). The segment covering 935 to 949 has biased composition (acidic residues); sequence DDDDEGMETLEEDTE. The residue at position 958 (serine 958) is a Phosphoserine; by AURKA. Phosphoserine occurs at positions 967 and 969. Composition is skewed to basic and acidic residues over residues 977–1005 and 1026–1039; these read DPEK…EKDK and RKDD…RIKI. A Phosphoserine modification is found at serine 1042. Over residues 1046–1071 the composition is skewed to basic and acidic residues; that stretch reads EEDRVRMKEEQERIQAKTREFRERQA. A coiled-coil region spans residues 1046–1078; the sequence is EEDRVRMKEEQERIQAKTREFRERQARERDYAE. The span at 1134 to 1143 shows a compositional bias: polar residues; it reads PGDSNRSTPS. Over residues 1144 to 1171 the composition is skewed to basic and acidic residues; that stretch reads NHDRIQRLRQEFQQAKQDEDVEDRRRTY. Coiled coils occupy residues 1145 to 1168, 1195 to 1218, and 1274 to 1295; these read HDRI…EDRR, VQVQ…YSSL, and MLET…LKKQ. Low complexity predominate over residues 1176-1199; sequence SWSSSRPASQSGRHSVSVEVQVQR. Residues 1215–1236 show a composition bias toward polar residues; that stretch reads YSSLPRQSRKNASSISQDSWEQ. Over residues 1283-1292 the composition is skewed to basic and acidic residues; the sequence is QEQRRKEQQL. A compositionally biased stretch (polar residues) spans 1314–1323; sequence SQVARLNRLQ. A compositionally biased stretch (basic and acidic residues) spans 1324-1333; sequence TPEKGRPFYS. Lysine 1327 carries the N6-acetyllysine modification.

Belongs to the PAR3 family. In terms of assembly, interacts with PRCKI and CDH5. Interacts (via PDZ 3 domain) with PTEN (via C-terminus). Component of a complex whose core is composed of ARHGAP17, AMOT, PALS1, PATJ and PARD3/PAR3. Interacts with LIMK2, AURKA and AURKB. Component of the Par polarity complex, composed of at least phosphorylated PRKCZ, PARD3 and TIAM1. Interacts with ECT2 and FBF1. Interacts (via PDZ 1 domain) with F11R/JAM1, PARD6A and PARD6B. Part of a complex with PARD6A or PARD6B, PRKCI or PRKCZ and CDC42 or RAC1. Directly interacts with TIAM1 and TIAM2. Interacts with SIRT2. Interacts (via coiled-coil domain) with FRMD4A. Found in a complex with PARD3, CYTH1 and FRMD4A. Interacts with SAPCD2. Interacts with PRKCA. As to quaternary structure, interacts with PRKCZ. In terms of processing, acetylated. Deacetylated by SIRT2, thereby inhibiting Schwann cell peripheral myelination. Phosphorylation at Ser-824 by PRKCZ and PRKCI occurs at the most apical tip of epithelial cell-cell contacts during the initial phase of tight junction formation and may promote dissociation of the complex with PARD6. EGF-induced Tyr-1123 phosphorylation mediates dissociation from LIMK2. Phosphorylation by AURKA at Ser-958 is required for the normal establishment of neuronal polarity. Isoform 4 and isoform 5 are phosphorylated during oocyte maturation. As to expression, all isoforms are expressed in heart, while expression in brain is mainly limited to isoform 1, and to isoform 3 to a weaker level.

It localises to the cytoplasm. The protein resides in the endomembrane system. The protein localises to the cell junction. Its subcellular location is the tight junction. It is found in the adherens junction. It localises to the cell cortex. The protein resides in the cytoskeleton. The protein localises to the cell membrane. In terms of biological role, adapter protein involved in asymmetrical cell division and cell polarization processes. Seems to play a central role in the formation of epithelial tight junctions. Targets the phosphatase PTEN to cell junctions. Association with PARD6B may prevent the interaction of PARD3 with F11R/JAM1, thereby preventing tight junction assembly. The PARD6-PARD3 complex links GTP-bound Rho small GTPases to atypical protein kinase C proteins. Required for establishment of neuronal polarity and normal axon formation in cultured hippocampal neurons. Involved in Schwann cell peripheral myelination. The polypeptide is Partitioning defective 3 homolog (Pard3) (Mus musculus (Mouse)).